The following is a 274-amino-acid chain: Protein A11 homolog (274 aa).

The stretch at 106-136 (DDNKRVHLLEQEIAELRKKKTKSKNLLDFTN) forms a coiled coil.

It belongs to the poxviridae A11 family. In terms of assembly, homomultimer. Interacts with A32. Phosphorylated by a F10-independent mechanism.

It localises to the host cytoplasm. Functionally, required for viral crescent formation early during virus morphogenesis. The chain is Protein A11 homolog from Fowlpox virus (strain NVSL) (FPV).